A 63-amino-acid chain; its full sequence is Alpha-conotoxin-like PuSG1.1 (63 aa).

The signal sequence occupies residues M1 to G21. Positions A22–R43 are excised as a propeptide. 2 cysteine pairs are disulfide-bonded: C46–C52 and C47–C60. The segment at P48–P50 is lacks the Ser-Xaa-Pro motif that is crucial for potent interaction with nAChR.

The protein belongs to the conotoxin A superfamily. In terms of tissue distribution, expressed by the salivary gland.

Its subcellular location is the secreted. In terms of biological role, alpha-conopeptides-like may act on postsynaptic membranes, they bind to the nicotinic acetylcholine receptors (nAChR) and thus inhibit them. Has possibly a distinct nAChR binding mode from other alpha-conotoxins, due to a different three residue motif (lacks the Ser-Xaa-Pro motif). The protein is Alpha-conotoxin-like PuSG1.1 of Conus pulicarius (Flea-bitten cone).